The chain runs to 221 residues: Thyrotroph embryonic factor (221 aa).

A disordered region spans residues 72–116 (ESASSSTASPPSSSTAVFQPSETVSSTESSLEKERETPSPIDPNC). A compositionally biased stretch (low complexity) spans 73 to 100 (SASSSTASPPSSSTAVFQPSETVSSTES). The bZIP domain occupies 173–221 (DEKYWTRRKKNNVAAKRSRDARRLKENQITIRAAFLEKENTALRTEVAD). The tract at residues 175 to 195 (KYWTRRKKNNVAAKRSRDARR) is basic motif. The leucine-zipper stretch occupies residues 196–203 (LKENQITI).

The protein belongs to the bZIP family. PAR subfamily. In terms of assembly, binds DNA as a homodimer or a heterodimer. Can form a heterodimer with DBP.

Its subcellular location is the nucleus. Its function is as follows. Transcription factor that binds to and transactivates the TSHB promoter. Binds to a minimal DNA-binding sequence 5'-[TC][AG][AG]TTA[TC][AG]-3'. The sequence is that of Thyrotroph embryonic factor (TEF) from Phodopus sungorus (Striped hairy-footed hamster).